Reading from the N-terminus, the 440-residue chain is Adenylosuccinate synthetase (440 aa).

GTP is bound by residues 14 to 20 and 42 to 44; these read GDEGKGK and GHT. Aspartate 15 serves as the catalytic Proton acceptor. 2 residues coordinate Mg(2+): aspartate 15 and glycine 42. Residues 15 to 18, 40 to 43, threonine 131, arginine 145, glutamine 226, threonine 241, and arginine 313 each bind IMP; these read DEGK and NAGH. Histidine 43 functions as the Proton donor in the catalytic mechanism. 309 to 315 provides a ligand contact to substrate; sequence ATTGRQR. GTP contacts are provided by residues arginine 315, 341–343, and 423–425; these read KLD and STG.

This sequence belongs to the adenylosuccinate synthetase family. In terms of assembly, homodimer. Mg(2+) is required as a cofactor.

The protein resides in the cytoplasm. It carries out the reaction IMP + L-aspartate + GTP = N(6)-(1,2-dicarboxyethyl)-AMP + GDP + phosphate + 2 H(+). It functions in the pathway purine metabolism; AMP biosynthesis via de novo pathway; AMP from IMP: step 1/2. Its function is as follows. Plays an important role in the de novo pathway of purine nucleotide biosynthesis. Catalyzes the first committed step in the biosynthesis of AMP from IMP. The polypeptide is Adenylosuccinate synthetase (Hydrogenovibrio crunogenus (strain DSM 25203 / XCL-2) (Thiomicrospira crunogena)).